We begin with the raw amino-acid sequence, 55 residues long: MVKLTSIAAGVAAIAAGASAAATTTLSQSDERVNLVELGVYVSDIRAHLAEYYSF.

The N-terminal stretch at Met1–Ala20 is a signal peptide.

Belongs to the SRP1/TIP1 family. Seripauperin subfamily.

This Saccharomyces cerevisiae (strain ATCC 204508 / S288c) (Baker's yeast) protein is Seripauperin-7 (PAU7).